We begin with the raw amino-acid sequence, 165 residues long: 3-hydroxyacyl-[acyl-carrier-protein] dehydratase FabZ (165 aa).

Histidine 68 is an active-site residue.

The protein belongs to the thioester dehydratase family. FabZ subfamily.

The protein localises to the cytoplasm. It carries out the reaction a (3R)-hydroxyacyl-[ACP] = a (2E)-enoyl-[ACP] + H2O. Involved in unsaturated fatty acids biosynthesis. Catalyzes the dehydration of short chain beta-hydroxyacyl-ACPs and long chain saturated and unsaturated beta-hydroxyacyl-ACPs. This is 3-hydroxyacyl-[acyl-carrier-protein] dehydratase FabZ from Methylobacterium sp. (strain 4-46).